The sequence spans 255 residues: Microfibril-associated glycoprotein 4 (255 aa).

Positions 1–20 (MEALLVLPLLLLLSAGPCAP) are cleaved as a signal peptide. Positions 26 to 28 (RGD) match the Cell attachment site motif. Residues 32 to 255 (KSCLQLPLDC…KRTEMKIRRA (224 aa)) form the Fibrinogen C-terminal domain. Residues asparagine 87 and asparagine 137 are each glycosylated (N-linked (GlcNAc...) asparagine).

In terms of assembly, homodimer. Can also form higher oligomers. Interacts with FBN1, FBN2 and LOX. Interacts with COL1A1 in a Ca (2+)-dependent manner. Interacts with ELN in a Ca (2+)-dependent manner; this interaction promotes ELN self-assembly.

The protein resides in the secreted. It localises to the extracellular space. Its subcellular location is the extracellular matrix. Functionally, could be involved in calcium-dependent cell adhesion or intercellular interactions. May contribute to the elastic fiber assembly and/or maintenance. In Bos taurus (Bovine), this protein is Microfibril-associated glycoprotein 4 (MFAP4).